The sequence spans 153 residues: Small ribosomal subunit protein uS13 (153 aa).

It belongs to the universal ribosomal protein uS13 family.

It localises to the cytoplasm. Functionally, located at the top of the head of the 40S subunit, it contacts several helices of the 18S rRNA. The polypeptide is Small ribosomal subunit protein uS13 (RPS18) (Chlamydomonas reinhardtii (Chlamydomonas smithii)).